Here is a 245-residue protein sequence, read N- to C-terminus: Enolase-phosphatase E1 (245 aa).

The protein belongs to the HAD-like hydrolase superfamily. MasA/MtnC family. As to quaternary structure, monomer. Mg(2+) serves as cofactor.

It catalyses the reaction 5-methylsulfanyl-2,3-dioxopentyl phosphate + H2O = 1,2-dihydroxy-5-(methylsulfanyl)pent-1-en-3-one + phosphate. It functions in the pathway amino-acid biosynthesis; L-methionine biosynthesis via salvage pathway; L-methionine from S-methyl-5-thio-alpha-D-ribose 1-phosphate: step 3/6. The protein operates within amino-acid biosynthesis; L-methionine biosynthesis via salvage pathway; L-methionine from S-methyl-5-thio-alpha-D-ribose 1-phosphate: step 4/6. In terms of biological role, bifunctional enzyme that catalyzes the enolization of 2,3-diketo-5-methylthiopentyl-1-phosphate (DK-MTP-1-P) into the intermediate 2-hydroxy-3-keto-5-methylthiopentenyl-1-phosphate (HK-MTPenyl-1-P), which is then dephosphorylated to form the acireductone 1,2-dihydroxy-3-keto-5-methylthiopentene (DHK-MTPene). The polypeptide is Enolase-phosphatase E1 (Parasynechococcus marenigrum (strain WH8102)).